The sequence spans 332 residues: Formamidase (332 aa).

The 246-residue stretch at 14–259 folds into the CN hydrolase domain; the sequence is FLAALIQYPV…WEIVTAEVYP (246 aa). Catalysis depends on Glu60, which acts as the Proton acceptor. The active-site Proton donor is Lys132. The Nucleophile role is filled by Cys165.

It belongs to the carbon-nitrogen hydrolase superfamily. Aliphatic amidase family.

It carries out the reaction formamide + H2O = formate + NH4(+). In terms of biological role, is an aliphatic amidase with a restricted substrate specificity, as it only hydrolyzes formamide. This Bacillus cereus (strain Q1) protein is Formamidase.